Here is a 580-residue protein sequence, read N- to C-terminus: Viral transcription factor IE2 (580 aa).

The span at 1–11 (MESSAKRKMDP) shows a compositional bias: basic and acidic residues. 2 disordered regions span residues 1–30 (MESS…TPVT) and 99–161 (DSSS…VIIK). Residues 99–133 (DSSSTGPTLTTHSCSVSSAPLNKPTPTSVAVTNTP) show a composition bias toward polar residues. Residues Lys175 and Lys180 each participate in a glycyl lysine isopeptide (Lys-Gly) (interchain with G-Cter in SUMO) cross-link. Positions 199–202 (CIVI) match the SUMO-interacting motif 1/SIM1 motif. 2 positions are modified to phosphoserine; by host CK2: Ser203 and Ser205. A disordered region spans residues 206-335 (EEEQGEEVET…KSKRISELDN (130 aa)). Composition is skewed to low complexity over residues 216 to 236 (RGAT…TSPT), 259 to 271 (SSSS…SASD), and 302 to 317 (AASS…SSGG). The short motif at 410-413 (IQII) is the SUMO-interacting motif 1/SIM2 element. The SUMO-interacting motif 1/SIM3 signature appears at 501–504 (VDLL).

The protein belongs to the HHV-5 IE2 protein family. Interacts with host SUMO-modified form of TATA-binding protein (TBP)-associated factor 12/TAF12 in a SIM-dependent manner; this interaction increases the transactivation activity of IE2. Interacts with host CHAF1A. Interacts with several components of the host transcriptional machinery including TBP, TF2B and CREB1. Interacts with host DNA replication licensing factor MCM3. Interacts with host PLSCR1; this interaction inhibits IE2 transactivating activity. Phosphorylated by host CK2 at Ser-203 and Ser-205; leading to enhanced SUMOylation. Post-translationally, SUMOylated; SUMOylation is enhanced when IE2 is phosphorylated by host CK2. The sumoylation is necessary for efficient replication of the virus and thus for the function of this viral transcription factor.

Its subcellular location is the host nucleus. Stimulates viral early and late gene expression and thus play a crucial role in the regulation of productive infection. Selectively drives host RNA Pol II transcription initiation at a subset of viral early-late and late promoters without substantially affecting Pol II transcription of expressed host genes. Mechanistically, forms a repressive complex at the major immediate-early promoter region involving direct association with host nucleosomes and TBP. Concerning activation, stimulates transcription by binding nearby, but not within, core promoter regions. In addition, activates quiescent cells to reenter the cell cycle and up-regulates several E2F-responsive genes, which are responsible for pushing the cell into S phase. In S-phase, inhibits cellular DNA synthesis and blocks further cell cycle progression. This is Viral transcription factor IE2 (UL122) from Human cytomegalovirus (strain AD169) (HHV-5).